The primary structure comprises 72 residues: Translation initiation factor IF-1 (72 aa).

One can recognise an S1-like domain in the interval 1-72 (MSKEDMIEFS…TKGRITFRFK (72 aa)).

It belongs to the IF-1 family. Component of the 30S ribosomal translation pre-initiation complex which assembles on the 30S ribosome in the order IF-2 and IF-3, IF-1 and N-formylmethionyl-tRNA(fMet); mRNA recruitment can occur at any time during PIC assembly.

Its subcellular location is the cytoplasm. One of the essential components for the initiation of protein synthesis. Stabilizes the binding of IF-2 and IF-3 on the 30S subunit to which N-formylmethionyl-tRNA(fMet) subsequently binds. Helps modulate mRNA selection, yielding the 30S pre-initiation complex (PIC). Upon addition of the 50S ribosomal subunit IF-1, IF-2 and IF-3 are released leaving the mature 70S translation initiation complex. The chain is Translation initiation factor IF-1 from Granulibacter bethesdensis (strain ATCC BAA-1260 / CGDNIH1).